A 206-amino-acid polypeptide reads, in one-letter code: Glutathione S-transferase class-mu 28 kDa isozyme (206 aa).

In terms of domain architecture, GST N-terminal spans 1 to 81; sequence VKLIYFNGRG…FIARKHNMMG (81 aa). Residues Tyr5, 5-6, Arg11, 36-40, Leu48, 50-51, and 65-66 contribute to the glutathione site; these read YF, WPKIK, IV, and ES. One can recognise a GST C-terminal domain in the interval 83–206; it reads TDDEYYIIEK…YLSERHATAF (124 aa).

Belongs to the GST superfamily. Mu family. As to quaternary structure, homodimer.

The enzyme catalyses RX + glutathione = an S-substituted glutathione + a halide anion + H(+). Its function is as follows. Conjugation of reduced glutathione to a wide number of exogenous and endogenous hydrophobic electrophiles. GST isoenzymes appear to play a central role in the parasite detoxification system. Other functions are also suspected including a role in increasing the solubility of haematin in the parasite gut. The sequence is that of Glutathione S-transferase class-mu 28 kDa isozyme from Schistosoma japonicum (Blood fluke).